Here is a 162-residue protein sequence, read N- to C-terminus: uncharacterized protein (162 aa).

The signal sequence occupies residues 1–19 (MARVYILFFSVFFVFPLFS). 2 helical membrane passes run 53 to 75 (LSIG…IRLI) and 105 to 127 (IVFG…YRAV).

It is found in the cell membrane. This is an uncharacterized protein from Treponema pallidum (strain Nichols).